The following is a 60-amino-acid chain: uncharacterized protein (60 aa).

This is an uncharacterized protein from Acidianus convivator (ATV).